The sequence spans 690 residues: Sodium-dependent phosphate transport protein 2B (690 aa).

Residues 1 to 42 (MAPWPELGDAQPNPDKYLEGAAGQQPTAPDKSKETNKTDNTE) are disordered. Over 1–100 (MAPWPELGDA…ILCFFQGIGR (100 aa)) the chain is Cytoplasmic. Residues 30 to 40 (DKSKETNKTDN) are compositionally biased toward basic and acidic residues. Residues 101–121 (LILLLGFLYFFVCSLDILSSA) traverse the membrane as a helical segment. Topologically, residues 122 to 135 (FQLVGGKMAGQFFS) are extracellular. Residues 136–156 (NSSIMSNPLLGLVIGVLVTVL) traverse the membrane as a helical segment. Residues 157-212 (VQSSSTSTSIVVSMVSSSLLTVRAAIPIIMGANIGTSITNTIVALMQVGDRSEFRR) are Cytoplasmic-facing. A helical membrane pass occupies residues 213-233 (AFAGATVHDFFNWLSVLVLLP). Residues 234–362 (VEVATHYLEI…IFVNFHLPDL (129 aa)) are Extracellular-facing. 5 N-linked (GlcNAc...) asparagine glycosylation sites follow: N295, N308, N313, N321, and N340. A disulfide bridge connects residues C303 and C350. A helical transmembrane segment spans residues 363–383 (AVGTILLILSLLVLCGCLIMI). Residues 384 to 407 (VKILGSVLKGQVATVIKKTINTDF) lie on the Cytoplasmic side of the membrane. The helical transmembrane segment at 408-428 (PFPFAWLTGYLAILVGAGMTF) threads the bilayer. The Extracellular portion of the chain corresponds to 429-485 (IVQSSSVFTSALTPLIGIGVITIERAYPLTLGSNIGTTTTAILAALASPGNALRSSL). The helical transmembrane segment at 486-506 (QIALCHFFFNISGILLWYPIP) threads the bilayer. At 507–525 (FTRLPIRMAKGLGNISAKY) the chain is on the cytoplasmic side. The helical transmembrane segment at 526–546 (RWFAVFYLIIFFFLIPLTVFG) threads the bilayer. Over 547–552 (LSLAGW) the chain is Extracellular. Residues 553–573 (RVLVGVGVPVVFIIILVLCLR) traverse the membrane as a helical segment. The Cytoplasmic segment spans residues 574 to 689 (LLQSRCPRVL…ASDSKTECTA (116 aa)).

It belongs to the SLC34A transporter family. Highly expressed in lung. Also detected in pancreas, kidney, small intestine, ovary, testis, prostate and mammary gland. In lung, it is found in alveolar type II cells but not in bronchiolar epithelium.

Its subcellular location is the apical cell membrane. The enzyme catalyses 3 Na(+)(out) + phosphate(out) = 3 Na(+)(in) + phosphate(in). In terms of biological role, involved in actively transporting phosphate into cells via Na(+) cotransport. In Homo sapiens (Human), this protein is Sodium-dependent phosphate transport protein 2B (SLC34A2).